The chain runs to 208 residues: Large ribosomal subunit protein bL25 (208 aa).

Residues 186 to 201 show a composition bias toward low complexity; that stretch reads PAGEKSAAAEEGAAAA. The segment at 186–208 is disordered; it reads PAGEKSAAAEEGAAAAGEDKPAA.

Belongs to the bacterial ribosomal protein bL25 family. CTC subfamily. As to quaternary structure, part of the 50S ribosomal subunit; part of the 5S rRNA/L5/L18/L25 subcomplex. Contacts the 5S rRNA. Binds to the 5S rRNA independently of L5 and L18.

Functionally, this is one of the proteins that binds to the 5S RNA in the ribosome where it forms part of the central protuberance. The sequence is that of Large ribosomal subunit protein bL25 from Ralstonia pickettii (strain 12J).